A 257-amino-acid polypeptide reads, in one-letter code: MRILITNDDGINADGLAALERIAAQLSDDVWVCAPEYEQSGASRALTLAEPIRVRRLDDRKFSTTGTPTDCVMLAVHELVKGRRPDLLLSGVNRGANLAEDVSMSGTVAGAIEGMALGVPSIALSQMGFYEPGESFEPAEAFAPGIIKRLVELGWPADVVLNVNFPNRPVEEITEVEVTRQGFRDVHVRHAERRTDLRGKEYYWIGFRQERSSPPDGTDLRALYEGKISVTPLHIDLTHQPAVFDLKGKLGGAPPKV.

A divalent metal cation contacts are provided by aspartate 8, aspartate 9, serine 40, and asparagine 93.

This sequence belongs to the SurE nucleotidase family. The cofactor is a divalent metal cation.

The protein resides in the cytoplasm. The enzyme catalyses a ribonucleoside 5'-phosphate + H2O = a ribonucleoside + phosphate. Its function is as follows. Nucleotidase that shows phosphatase activity on nucleoside 5'-monophosphates. The polypeptide is 5'-nucleotidase SurE (Phenylobacterium zucineum (strain HLK1)).